The following is a 734-amino-acid chain: Photosystem I P700 chlorophyll a apoprotein A2 (734 aa).

The next 8 membrane-spanning stretches (helical) occupy residues 46–69 (IFASHFGQLAIIFLWTSGNLFHVA), 135–158 (LYTGALFLLFLSALSLIGGWLHLQ), 175–199 (LNHHLSGLFGVSSLAWTGHLVHVAI), 273–291 (MAHHHLAIAILFLIAGHMY), 330–353 (IHFQLGLALASLGVITSLVAQHMY), 369–395 (AALYTHHQYIAGFIMTGAFAHGAIFFI), 417–439 (AIISQLSWASLFLGFHTLGLYVH), and 517–535 (FLVHHAIALGLHTTTLILV). [4Fe-4S] cluster is bound by residues C559 and C568. The next 2 membrane-spanning stretches (helical) occupy residues 575–596 (AFYLAVFWMLNTIGWVTFYWHW) and 643–665 (LSVWAWMFLFGHLVWATGFMFLI). The chlorophyll a site is built by H654, M662, and Y670. W671 is a phylloquinone binding site. Residues 707 to 727 (LVGLAHFSVGYIFTYAAFLIA) traverse the membrane as a helical segment.

This sequence belongs to the PsaA/PsaB family. In terms of assembly, the PsaA/B heterodimer binds the P700 chlorophyll special pair and subsequent electron acceptors. PSI consists of a core antenna complex that captures photons, and an electron transfer chain that converts photonic excitation into a charge separation. The eukaryotic PSI reaction center is composed of at least 11 subunits. P700 is a chlorophyll a/chlorophyll a' dimer, A0 is one or more chlorophyll a, A1 is one or both phylloquinones and FX is a shared 4Fe-4S iron-sulfur center. serves as cofactor.

Its subcellular location is the plastid. It localises to the chloroplast thylakoid membrane. It catalyses the reaction reduced [plastocyanin] + hnu + oxidized [2Fe-2S]-[ferredoxin] = oxidized [plastocyanin] + reduced [2Fe-2S]-[ferredoxin]. Functionally, psaA and PsaB bind P700, the primary electron donor of photosystem I (PSI), as well as the electron acceptors A0, A1 and FX. PSI is a plastocyanin-ferredoxin oxidoreductase, converting photonic excitation into a charge separation, which transfers an electron from the donor P700 chlorophyll pair to the spectroscopically characterized acceptors A0, A1, FX, FA and FB in turn. Oxidized P700 is reduced on the lumenal side of the thylakoid membrane by plastocyanin. In Draba nemorosa (Woodland whitlowgrass), this protein is Photosystem I P700 chlorophyll a apoprotein A2.